A 109-amino-acid chain; its full sequence is Small ribosomal subunit protein uS17A (109 aa).

The protein belongs to the universal ribosomal protein uS17 family. In terms of assembly, part of the 30S ribosomal subunit.

Its function is as follows. One of the primary rRNA binding proteins, it binds specifically to the 5'-end of 16S ribosomal RNA. The chain is Small ribosomal subunit protein uS17A from Methanosarcina acetivorans (strain ATCC 35395 / DSM 2834 / JCM 12185 / C2A).